Consider the following 417-residue polypeptide: UDP-N-acetylglucosamine 1-carboxyvinyltransferase (417 aa).

Position 22–23 (22–23) interacts with phosphoenolpyruvate; the sequence is KN. R92 is a binding site for UDP-N-acetyl-alpha-D-glucosamine. C116 acts as the Proton donor in catalysis. C116 is subject to 2-(S-cysteinyl)pyruvic acid O-phosphothioketal. Positions 304 and 326 each coordinate UDP-N-acetyl-alpha-D-glucosamine.

The protein belongs to the EPSP synthase family. MurA subfamily.

Its subcellular location is the cytoplasm. It catalyses the reaction phosphoenolpyruvate + UDP-N-acetyl-alpha-D-glucosamine = UDP-N-acetyl-3-O-(1-carboxyvinyl)-alpha-D-glucosamine + phosphate. Its pathway is cell wall biogenesis; peptidoglycan biosynthesis. In terms of biological role, cell wall formation. Adds enolpyruvyl to UDP-N-acetylglucosamine. This is UDP-N-acetylglucosamine 1-carboxyvinyltransferase from Desulfosudis oleivorans (strain DSM 6200 / JCM 39069 / Hxd3) (Desulfococcus oleovorans).